We begin with the raw amino-acid sequence, 121 residues long: Large ribosomal subunit protein uL22c (121 aa).

The protein belongs to the universal ribosomal protein uL22 family. In terms of assembly, part of the 50S ribosomal subunit.

The protein resides in the plastid. It is found in the chloroplast. This protein binds specifically to 23S rRNA. Functionally, the globular domain of the protein is located near the polypeptide exit tunnel on the outside of the subunit, while an extended beta-hairpin is found that lines the wall of the exit tunnel in the center of the 70S ribosome. This is Large ribosomal subunit protein uL22c (rpl22) from Welwitschia mirabilis (Tree tumbo).